We begin with the raw amino-acid sequence, 227 residues long: NDR1/HIN1-like protein 10 (227 aa).

Residues Val42 to Ile62 form a helical membrane-spanning segment. N-linked (GlcNAc...) asparagine glycosylation is found at Asn138 and Asn210.

As to expression, expressed in senescing leaves.

It localises to the cell membrane. May play a role in plant immunity. The protein is NDR1/HIN1-like protein 10 of Arabidopsis thaliana (Mouse-ear cress).